We begin with the raw amino-acid sequence, 149 residues long: MWIYLILMVALVIIDQVIKAAIVSHIALGASTSIVTGLLSLTNLHNNGAAWSILEGKMWFFYLISVIALIVMGYLLWRLRGKWLYEVGISLMIAGTLGNFIDRLRIGYVVDMFQLDFINFPIFNFADSCLTVGVIFILIGVLRDDSFEK.

3 helical membrane passes run 24–44 (SHIALGASTSIVTGLLSLTNL), 57–77 (KMWFFYLISVIALIVMGYLLW), and 81–101 (GKWLYEVGISLMIAGTLGNFI). Active-site residues include aspartate 111 and aspartate 127. Residues 122 to 142 (IFNFADSCLTVGVIFILIGVL) traverse the membrane as a helical segment.

This sequence belongs to the peptidase A8 family.

It localises to the cell membrane. The catalysed reaction is Release of signal peptides from bacterial membrane prolipoproteins. Hydrolyzes -Xaa-Yaa-Zaa-|-(S,diacylglyceryl)Cys-, in which Xaa is hydrophobic (preferably Leu), and Yaa (Ala or Ser) and Zaa (Gly or Ala) have small, neutral side chains.. The protein operates within protein modification; lipoprotein biosynthesis (signal peptide cleavage). Its function is as follows. This protein specifically catalyzes the removal of signal peptides from prolipoproteins. The polypeptide is Lipoprotein signal peptidase (Lactiplantibacillus plantarum (strain ATCC BAA-793 / NCIMB 8826 / WCFS1) (Lactobacillus plantarum)).